A 438-amino-acid chain; its full sequence is PHAF1 protein CG7083 (438 aa).

Belongs to the PHAF1 family.

Its subcellular location is the cytoplasm. The protein localises to the preautophagosomal structure. Functionally, may play a regulatory role in autophagic activity. The sequence is that of PHAF1 protein CG7083 from Drosophila melanogaster (Fruit fly).